A 408-amino-acid chain; its full sequence is CinA-like protein (408 aa).

It belongs to the CinA family.

This Anaeromyxobacter dehalogenans (strain 2CP-1 / ATCC BAA-258) protein is CinA-like protein.